Consider the following 868-residue polypeptide: Alanine--tRNA ligase (868 aa).

Positions 553, 557, 657, and 661 each coordinate Zn(2+). The tract at residues 831 to 851 (GGKGGGRADMAQAGGSRPQAL) is disordered.

The protein belongs to the class-II aminoacyl-tRNA synthetase family. Zn(2+) is required as a cofactor.

The protein localises to the cytoplasm. It carries out the reaction tRNA(Ala) + L-alanine + ATP = L-alanyl-tRNA(Ala) + AMP + diphosphate. Catalyzes the attachment of alanine to tRNA(Ala) in a two-step reaction: alanine is first activated by ATP to form Ala-AMP and then transferred to the acceptor end of tRNA(Ala). Also edits incorrectly charged Ser-tRNA(Ala) and Gly-tRNA(Ala) via its editing domain. In Chromohalobacter salexigens (strain ATCC BAA-138 / DSM 3043 / CIP 106854 / NCIMB 13768 / 1H11), this protein is Alanine--tRNA ligase.